Reading from the N-terminus, the 141-residue chain is MAVERTFSIIKPKAVTKNVIGAIYTRFETAKLKIISAKMLLLTIEQAEGFYVEHKNRDFFTNLIQSITSGPVMIQVLEGENAVKRNREIMGETDPKKALAGTLRADFGDSLTDNALHGSDSLASAEREIAYFFKFDEIFSR.

ATP contacts are provided by Lys11, Phe59, Arg87, Thr93, Arg104, and Asn114. His117 functions as the Pros-phosphohistidine intermediate in the catalytic mechanism.

Belongs to the NDK family. Homotetramer. The cofactor is Mg(2+).

The protein resides in the cytoplasm. It catalyses the reaction a 2'-deoxyribonucleoside 5'-diphosphate + ATP = a 2'-deoxyribonucleoside 5'-triphosphate + ADP. The catalysed reaction is a ribonucleoside 5'-diphosphate + ATP = a ribonucleoside 5'-triphosphate + ADP. Functionally, major role in the synthesis of nucleoside triphosphates other than ATP. The ATP gamma phosphate is transferred to the NDP beta phosphate via a ping-pong mechanism, using a phosphorylated active-site intermediate. This chain is Nucleoside diphosphate kinase, found in Hamiltonella defensa subsp. Acyrthosiphon pisum (strain 5AT).